The sequence spans 149 residues: MAGQLTFKRELEKVFEKELKKRIERIGKTPLSPLSLILFTRIAELSAIENGYIRPTEYEMREIFAARTTYSEGLLSTLKDIIYSHFLRSNLGEHLEDFIYTLQRIEDIQSKIDELILREMREVSLRKVYHELLRFLLDMLCDKDMVRFD.

This is an uncharacterized protein from Archaeoglobus fulgidus (strain ATCC 49558 / DSM 4304 / JCM 9628 / NBRC 100126 / VC-16).